The following is a 147-amino-acid chain: Deoxyuridine 5'-triphosphate nucleotidohydrolase (147 aa).

Substrate-binding positions include 67–69 (RSG), asparagine 80, and 84–86 (LID).

It belongs to the dUTPase family. Mg(2+) is required as a cofactor.

It carries out the reaction dUTP + H2O = dUMP + diphosphate + H(+). The protein operates within pyrimidine metabolism; dUMP biosynthesis; dUMP from dCTP (dUTP route): step 2/2. Functionally, this enzyme is involved in nucleotide metabolism: it produces dUMP, the immediate precursor of thymidine nucleotides and it decreases the intracellular concentration of dUTP so that uracil cannot be incorporated into DNA. The sequence is that of Deoxyuridine 5'-triphosphate nucleotidohydrolase from Gloeobacter violaceus (strain ATCC 29082 / PCC 7421).